A 773-amino-acid chain; its full sequence is Protein FAM149A (773 aa).

2 stretches are compositionally biased toward low complexity: residues 18–37 (TSTAPPAGPSSRPSGGAAAA) and 54–90 (LLRALAPDSPSASRRSPAPLLSSPYSRGSAASRAAGA). 4 disordered regions span residues 18-155 (TSTA…RELG), 173-210 (DIGEEGASDGDSGDGEARGLSEGRRRHGFTVRSKDSLP), 232-264 (FSSSGSHTPTGAHTSWSGSATQSSTTGSSTERG), and 568-613 (TQNE…PWRL). Positions 174 to 186 (IGEEGASDGDSGD) are enriched in acidic residues. The segment covering 245–264 (TSWSGSATQSSTTGSSTERG) has biased composition (low complexity).

It belongs to the FAM149 family.

This is Protein FAM149A (FAM149A) from Homo sapiens (Human).